We begin with the raw amino-acid sequence, 434 residues long: Fez family zinc finger protein 2 (434 aa).

Residues 27–42 carry the Engrailed homology 1 repressor motif; it reads SLAFSIERIMAKTSEP. C2H2-type zinc fingers lie at residues 253-275, 281-303, 309-331, 337-359, 365-387, and 393-416; these read FTCEVCGKVFNAHYNLTRHMPVH, FVCKVCGKGFRQASTLCRHKIIH, HKCNQCGKAFNRSSTLNTHIRIH, FVCEFCGKGFHQKGNYKNHKLTH, YKCSICNKAFHQVYNLTFHMHTH, and FTCATCGKGFCRNFDLKKHVRKLH.

Belongs to the krueppel C2H2-type zinc-finger protein family.

Its subcellular location is the nucleus. Functionally, transcription repressor. Component of the regulatory cascade that controls the development of dopaminergic (DA) and serotonergic (5HT) neurons. The chain is Fez family zinc finger protein 2 (fezf2) from Xenopus laevis (African clawed frog).